The following is a 137-amino-acid chain: Large ribosomal subunit protein bL17 (137 aa).

Belongs to the bacterial ribosomal protein bL17 family. In terms of assembly, part of the 50S ribosomal subunit. Contacts protein L32.

The sequence is that of Large ribosomal subunit protein bL17 from Bradyrhizobium sp. (strain BTAi1 / ATCC BAA-1182).